We begin with the raw amino-acid sequence, 647 residues long: Auxin efflux carrier component 2 (647 aa).

At 1 to 7 the chain is on the extracellular side; it reads MITGKDM. The chain crosses the membrane as a helical span at residues 8 to 28; the sequence is YDVLAAMVPLYVAMILAYGSV. The Cytoplasmic segment spans residues 29–38; that stretch reads RWWGIFTPDQ. The helical transmembrane segment at 39–59 threads the bilayer; that stretch reads CSGINRFVAVFAVPLLSFHFI. Residue valine 51 coordinates (indol-3-yl)acetate. The Extracellular portion of the chain corresponds to 60–68; it reads SSNDPYAMN. Residues 69–89 traverse the membrane as a helical segment; the sequence is YHFLAADSLQKVVILAALFLW. Residues 90–100 lie on the Cytoplasmic side of the membrane; the sequence is QAFSRRGSLEW. Residues 101–121 traverse the membrane as a helical segment; the sequence is MITLFSLSTLPNTLVMGIPLL. The (indol-3-yl)acetate site is built by asparagine 112 and leucine 114. Residues 122-131 lie on the Extracellular side of the membrane; sequence RAMYGDFSGN. A helical transmembrane segment spans residues 132 to 152; that stretch reads LMVQIVVLQSIIWYTLMLFLF. Residue tyrosine 145 coordinates (indol-3-yl)acetate. Residues 153-507 lie on the Cytoplasmic side of the membrane; it reads EFRGAKLLIS…LIRNPNTYSS (355 aa). Phosphoserine occurs at positions 237, 258, and 310. The segment at 339 to 380 is disordered; it reads SVPSYPPPNPMFTGSTSGASGVKKKESGGGGSGGGVGVGGQN. Threonine 354 is subject to Phosphothreonine. Residues 366–378 show a composition bias toward gly residues; that stretch reads GGGGSGGGVGVGG. A Phosphoserine modification is found at serine 393. Disordered stretches follow at residues 397–420 and 440–481; these read EANAKNAMTRGSSTDVSTDPKVSI and PGRK…QQMP. The helical transmembrane segment at 508–528 threads the bilayer; the sequence is LFGLAWSLVSFKWNIKMPTIM. Residues 529-531 lie on the Extracellular side of the membrane; the sequence is SGS. The helical transmembrane segment at 532 to 552 threads the bilayer; it reads ISILSDAGLGMAMFSLGLFMA. At 553–568 the chain is on the cytoplasmic side; the sequence is LQPKIIACGKSVAGFA. Residues 569-589 traverse the membrane as a helical segment; that stretch reads MAVRFLTGPAVIAATSIAIGI. The Extracellular portion of the chain corresponds to 590–592; it reads RGD. Residues 593-613 traverse the membrane as a helical segment; sequence LLHIAIVQAALPQGIVPFVFA. Residues isoleucine 607 and valine 608 each contribute to the (indol-3-yl)acetate site. The Cytoplasmic portion of the chain corresponds to 614 to 626; it reads KEYNVHPDILSTA. A helical membrane pass occupies residues 627–647; that stretch reads VIFGMLVALPVTVLYYVLLGL.

It belongs to the auxin efflux carrier (TC 2.A.69.1) family. In terms of assembly, homodimer. Interacts with FYPP1 and FYPP3. Component of a complex made of PINs (e.g. PIN1 and PIN2), MAB4/MELs (e.g. NPY1/MAB4 and NPY5/MEL1) and AGC kinases (e.g. D6PK and PID) at the plasma membrane. Binds directly to NPY1/MAB4, NPY5/MEL1 and PID. In terms of tissue distribution, root-specific. Localized to the cortex, epidermis and lateral root cap, predominantly at the upper side of cells.

The protein localises to the cell membrane. In terms of biological role, acts as a component of the auxin efflux carrier. Seems to be involved in the root-specific auxin transport, and mediates the root gravitropism. Its particular localization suggests a role in the translocation of auxin towards the elongation zone. Recrutes NPY proteins (e.g. NPY1/MAB4 and NPY5/MEL1) to the plasma membrane in a polar basal localization in root epidermis; this activity is optimized by AGC kinases-mediated (e.g. D6PK and PID) phosphorylation that limits their lateral diffusion-based escape. This Arabidopsis thaliana (Mouse-ear cress) protein is Auxin efflux carrier component 2.